Here is a 452-residue protein sequence, read N- to C-terminus: Glucose-6-phosphate isomerase (452 aa).

Glu290 serves as the catalytic Proton donor. Residues His311 and Lys425 contribute to the active site.

Belongs to the GPI family.

The protein resides in the cytoplasm. It catalyses the reaction alpha-D-glucose 6-phosphate = beta-D-fructose 6-phosphate. It participates in carbohydrate biosynthesis; gluconeogenesis. The protein operates within carbohydrate degradation; glycolysis; D-glyceraldehyde 3-phosphate and glycerone phosphate from D-glucose: step 2/4. Functionally, catalyzes the reversible isomerization of glucose-6-phosphate to fructose-6-phosphate. This chain is Glucose-6-phosphate isomerase, found in Limosilactobacillus reuteri (strain DSM 20016) (Lactobacillus reuteri).